We begin with the raw amino-acid sequence, 428 residues long: Homoserine dehydrogenase (428 aa).

NADPH is bound by residues F10, T12, V13, R44, and K106. V13 lines the NAD(+) pocket. Residues V13, R44, and K106 each contribute to the NADP(+) site. E130, V133, G135, and I137 together coordinate Na(+). Residues G188 and E191 each coordinate NADP(+). The L-homoserine site is built by E191 and D202. The active-site Proton donor is the K206. Position 303 (G303) interacts with NADPH. G303 lines the NAD(+) pocket. G303 serves as a coordination point for NADP(+). Positions 351 to 425 constitute an ACT domain; that stretch reads YFSVETPDST…DFKLLNYFKV (75 aa).

It belongs to the homoserine dehydrogenase family. The cofactor is a metal cation.

The enzyme catalyses L-homoserine + NADP(+) = L-aspartate 4-semialdehyde + NADPH + H(+). It carries out the reaction L-homoserine + NAD(+) = L-aspartate 4-semialdehyde + NADH + H(+). The protein operates within amino-acid biosynthesis; L-methionine biosynthesis via de novo pathway; L-homoserine from L-aspartate: step 3/3. Its pathway is amino-acid biosynthesis; L-threonine biosynthesis; L-threonine from L-aspartate: step 3/5. In terms of biological role, catalyzes the conversion of L-aspartate-beta-semialdehyde (L-Asa) to L-homoserine (L-Hse), the third step in the biosynthesis of threonine and methionine from aspartate. This chain is Homoserine dehydrogenase (hom), found in Lactococcus lactis subsp. lactis (strain IL1403) (Streptococcus lactis).